Here is a 160-residue protein sequence, read N- to C-terminus: Small ribosomal subunit protein uS7B (160 aa).

The protein belongs to the universal ribosomal protein uS7 family. In terms of assembly, part of the 30S ribosomal subunit. Contacts proteins S9 and S11.

Functionally, one of the primary rRNA binding proteins, it binds directly to 16S rRNA where it nucleates assembly of the head domain of the 30S subunit. Is located at the subunit interface close to the decoding center, probably blocks exit of the E-site tRNA. The polypeptide is Small ribosomal subunit protein uS7B (Aquifex aeolicus (strain VF5)).